The sequence spans 215 residues: UPF0502 protein YceH (215 aa).

Belongs to the UPF0502 family.

The polypeptide is UPF0502 protein YceH (Salmonella heidelberg (strain SL476)).